Here is an 84-residue protein sequence, read N- to C-terminus: MSEFWLCFNCCIAEQPQPKRRRRIDRSMIGEPTNFVHTAHVGSGDLFSGMNSVSSIQNQMQSKGGYGGGMAANVQMQLVDTKAG.

S-palmitoyl cysteine attachment occurs at residues Cys10 and Cys11. The CRIB domain occupies 29-42 (IGEPTNFVHTAHVG). Residues Ser43 and Ser52 each carry the phosphoserine modification.

The protein belongs to the CDC42SE/SPEC family. In terms of assembly, interacts with CDC42 (in GTP-bound form). Interacts weakly with RAC1 and not at all with RHOA.

The protein localises to the cytoplasm. Its subcellular location is the cytoskeleton. It localises to the cell membrane. The protein resides in the cell projection. It is found in the phagocytic cup. In terms of biological role, probably involved in the organization of the actin cytoskeleton by acting downstream of CDC42, inducing actin filament assembly. Alters CDC42-induced cell shape changes. In activated T-cells, may play a role in CDC42-mediated F-actin accumulation at the immunological synapse. May play a role in early contractile events in phagocytosis in macrophages. The polypeptide is CDC42 small effector protein 2 (CDC42SE2) (Bos taurus (Bovine)).